The sequence spans 435 residues: GTPase Der (435 aa).

EngA-type G domains follow at residues 4–167 and 175–350; these read GIVA…PSHE and TRVS…TALD. GTP-binding positions include 10–17, 57–61, 119–122, 181–188, 228–232, and 293–296; these read GRPNVGKS, DTGGI, NKYD, DTAGI, and NKWD. The 85-residue stretch at 351–435 folds into the KH-like domain; the sequence is KKIKTSVFNE…PMSIIFRERK (85 aa).

This sequence belongs to the TRAFAC class TrmE-Era-EngA-EngB-Septin-like GTPase superfamily. EngA (Der) GTPase family. As to quaternary structure, associates with the 50S ribosomal subunit.

GTPase that plays an essential role in the late steps of ribosome biogenesis. This is GTPase Der from Mesoplasma florum (strain ATCC 33453 / NBRC 100688 / NCTC 11704 / L1) (Acholeplasma florum).